The following is a 218-amino-acid chain: Thiopurine S-methyltransferase (218 aa).

Residues Trp10, Leu45, Glu66, and Arg123 each coordinate S-adenosyl-L-methionine.

Belongs to the class I-like SAM-binding methyltransferase superfamily. TPMT family.

The protein resides in the cytoplasm. It catalyses the reaction S-adenosyl-L-methionine + a thiopurine = S-adenosyl-L-homocysteine + a thiopurine S-methylether.. This chain is Thiopurine S-methyltransferase, found in Shewanella sp. (strain MR-4).